We begin with the raw amino-acid sequence, 420 residues long: Acetyl-CoA acetyltransferase, mitochondrial (420 aa).

The transit peptide at 1–33 (MAFCGPRTAARLSHSTRALHYTHRGHVSQRTLN) directs the protein to the mitochondrion. The active-site Acyl-thioester intermediate is cysteine 119. CoA-binding positions include tyrosine 212, 251-253 (RVD), and lysine 256. A K(+)-binding site is contributed by tyrosine 212. The K(+) site is built by alanine 273, alanine 274, and alanine 276. Serine 277 contributes to the CoA binding site. Valine 374 contributes to the K(+) binding site. Cysteine 406 serves as the catalytic Proton donor/acceptor.

Belongs to the thiolase-like superfamily. Thiolase family. As to quaternary structure, homotetramer.

Its subcellular location is the mitochondrion. It carries out the reaction 2 acetyl-CoA = acetoacetyl-CoA + CoA. The catalysed reaction is propanoyl-CoA + acetyl-CoA = 2-methyl-3-oxobutanoyl-CoA + CoA. Its pathway is lipid metabolism; fatty acid beta-oxidation. In terms of biological role, this is one of the enzymes that catalyzes the last step of the mitochondrial beta-oxidation pathway, an aerobic process breaking down fatty acids into acetyl-CoA. Using free coenzyme A/CoA, catalyzes the thiolytic cleavage of medium- to long-chain 3-oxoacyl-CoAs into acetyl-CoA and a fatty acyl-CoA shortened by two carbon atoms. The activity of the enzyme is reversible and it can also catalyze the condensation of two acetyl-CoA molecules into acetoacetyl-CoA. Thereby, it plays a major role in ketone body metabolism. This chain is Acetyl-CoA acetyltransferase, mitochondrial (acat1), found in Xenopus tropicalis (Western clawed frog).